Reading from the N-terminus, the 165-residue chain is Lipoprotein signal peptidase (165 aa).

The next 3 helical transmembrane spans lie at F9 to Y29, K69 to L89, and I98 to F118. Residues D124 and D142 contribute to the active site. Residues W133–V153 traverse the membrane as a helical segment.

This sequence belongs to the peptidase A8 family.

Its subcellular location is the cell inner membrane. It carries out the reaction Release of signal peptides from bacterial membrane prolipoproteins. Hydrolyzes -Xaa-Yaa-Zaa-|-(S,diacylglyceryl)Cys-, in which Xaa is hydrophobic (preferably Leu), and Yaa (Ala or Ser) and Zaa (Gly or Ala) have small, neutral side chains.. It participates in protein modification; lipoprotein biosynthesis (signal peptide cleavage). Functionally, this protein specifically catalyzes the removal of signal peptides from prolipoproteins. The polypeptide is Lipoprotein signal peptidase (Chlamydia caviae (strain ATCC VR-813 / DSM 19441 / 03DC25 / GPIC) (Chlamydophila caviae)).